A 317-amino-acid polypeptide reads, in one-letter code: uncharacterized protein (317 aa).

The signal sequence occupies residues 1-16; that stretch reads MKLSFILSTLVAGALA. Asparagine 42 carries an N-linked (GlcNAc...) asparagine glycan. 2 stretches are compositionally biased toward low complexity: residues 150–238 and 247–259; these read SSST…SSSS and TASTDDSSSASSA. The interval 150-259 is disordered; the sequence is SSSTPSSSSS…TDDSSSASSA (110 aa).

This is an uncharacterized protein from Schizosaccharomyces pombe (strain 972 / ATCC 24843) (Fission yeast).